We begin with the raw amino-acid sequence, 511 residues long: Cobyric acid synthase (511 aa).

One can recognise a GATase cobBQ-type domain in the interval 251 to 443; that stretch reads LLDIAIICLP…IHGIFDNDIF (193 aa). C332 serves as the catalytic Nucleophile. H435 is an active-site residue.

It belongs to the CobB/CobQ family. CobQ subfamily.

Its pathway is cofactor biosynthesis; adenosylcobalamin biosynthesis. Functionally, catalyzes amidations at positions B, D, E, and G on adenosylcobyrinic A,C-diamide. NH(2) groups are provided by glutamine, and one molecule of ATP is hydrogenolyzed for each amidation. This is Cobyric acid synthase from Listeria welshimeri serovar 6b (strain ATCC 35897 / DSM 20650 / CCUG 15529 / CIP 8149 / NCTC 11857 / SLCC 5334 / V8).